Here is a 192-residue protein sequence, read N- to C-terminus: Endoribonuclease YbeY (192 aa).

Residues histidine 109, histidine 113, and histidine 119 each contribute to the Zn(2+) site. The tract at residues 142-192 (VGAALREGGPARAAETETSWTRSPTSTSTRSPSGSTARGTRARSSRAGSGR) is disordered. A compositionally biased stretch (low complexity) spans 159–180 (TSWTRSPTSTSTRSPSGSTARG).

The protein belongs to the endoribonuclease YbeY family. Zn(2+) is required as a cofactor.

The protein resides in the cytoplasm. Single strand-specific metallo-endoribonuclease involved in late-stage 70S ribosome quality control and in maturation of the 3' terminus of the 16S rRNA. In Anaeromyxobacter sp. (strain Fw109-5), this protein is Endoribonuclease YbeY.